A 223-amino-acid chain; its full sequence is Movement and silencing protein TGBp1 (223 aa).

A (+)RNA virus helicase ATP-binding domain is found at 1 to 136 (METVLSLLNE…QILRDLGYNI (136 aa)). Positions 137 to 223 (ASSKEDIVEK…HRSKLVLVSN (87 aa)) constitute a (+)RNA virus helicase C-terminal domain.

Belongs to the Tymovirales TGBp1 protein family. In terms of assembly, homodimer and homooligomer. Interacts with capsid protein. Interacts with host AGO1; this interaction targets the host protein for degradation, thereby suppressing the antiviral RNA silencing.

It is found in the host cytoplasm. Transports viral genome to neighboring plant cells directly through plasmosdesmata, without any budding. The movement protein allows efficient cell to cell propagation, by bypassing the host cell wall barrier. Increases plasmodesma size exclusion limit. Acts as a suppressor of RNA-mediated gene silencing, also known as post-transcriptional gene silencing (PTGS), a mechanism of plant viral defense that limits the accumulation of viral RNAs. In Crataegus (hawthorn), this protein is Movement and silencing protein TGBp1.